A 1121-amino-acid polypeptide reads, in one-letter code: Myelin transcription factor 1 (1121 aa).

2 disordered regions span residues 1-156 (MSLE…SKGS) and 200-376 (EAAE…MTRG). The segment at 21-64 (PETTAADLSCPTPGCTGSGHVRGKYSRHRSLQSCPLAKKRKLEG) adopts a CCHHC-type 1 zinc-finger fold. 4 residues coordinate Zn(2+): Cys30, Cys35, His48, and Cys54. A compositionally biased stretch (basic residues) spans 41–50 (VRGKYSRHRS). 2 stretches are compositionally biased toward basic and acidic residues: residues 62 to 71 (LEGAEAEHLV) and 123 to 132 (DEIHRPETAE). Residues 147 to 156 (GSATASSKGS) are compositionally biased toward low complexity. Acidic residues predominate over residues 258-308 (EEEDEEEEEEEEEEEEDEEEEEEEEEEEEEEEEEEEEEEEEEEEEEEEEAA). Residues 346–358 (VRSDDDKDEDTHS) show a composition bias toward basic and acidic residues. 2 consecutive CCHHC-type zinc fingers follow at residues 433–476 (SRAE…PPEI) and 477–520 (LAMH…KLAK). Residues Cys442, Cys447, His460, Cys466, Cys486, Cys491, His504, and Cys510 each coordinate Zn(2+). Disordered regions lie at residues 517 to 540 (KLAK…SNSD) and 668 to 774 (TLDL…EERK). Residues 526 to 540 (QPQTGDPSKSSSNSD) are compositionally biased toward polar residues. Over residues 705 to 723 (SSTSAPSSSMTSPQSSQAS) the composition is skewed to low complexity. The segment covering 724-733 (RQDEWDRPLD) has biased composition (basic and acidic residues). The span at 759 to 770 (EADDQEVSEENF) shows a compositional bias: acidic residues. CCHHC-type zinc fingers lie at residues 791–834 (KDIK…LRNL), 835–878 (MAAH…GVKV), 884–927 (DKED…QKEG), and 937–980 (KSLK…GKKG). 16 residues coordinate Zn(2+): Cys800, Cys805, His818, Cys824, Cys844, Cys849, His862, Cys868, Cys893, Cys898, His911, Cys917, Cys946, Cys951, His964, and Cys970.

It belongs to the MYT1 family. In terms of assembly, interacts with STEAP3. As to expression, mostly in developing nervous system. Expressed in neural progenitors and oligodendrocyte lineage cells. More highly expressed in oligodendrocyte progenitors than in differentiated oligodendrocytes.

Its subcellular location is the nucleus. In terms of biological role, binds to the promoter region of genes encoding proteolipid proteins of the central nervous system. May play a role in the development of neurons and oligodendroglia in the CNS. May regulate a critical transition point in oligodendrocyte lineage development by modulating oligodendrocyte progenitor proliferation relative to terminal differentiation and up-regulation of myelin gene transcription. The polypeptide is Myelin transcription factor 1 (MYT1) (Homo sapiens (Human)).